The chain runs to 463 residues: Asparagine--tRNA ligase (463 aa).

Belongs to the class-II aminoacyl-tRNA synthetase family. In terms of assembly, homodimer.

The protein localises to the cytoplasm. It carries out the reaction tRNA(Asn) + L-asparagine + ATP = L-asparaginyl-tRNA(Asn) + AMP + diphosphate + H(+). The sequence is that of Asparagine--tRNA ligase from Clostridium botulinum (strain ATCC 19397 / Type A).